The following is a 330-amino-acid chain: DNA-directed RNA polymerase I subunit RPA43 (330 aa).

A disordered region spans residues 251–330 (ADVTDVTPQE…ANFESPKKRQ (80 aa)). Ser-306, Ser-318, and Ser-325 each carry phosphoserine. The span at 317–330 (HSEEANFESPKKRQ) shows a compositional bias: basic and acidic residues.

The protein belongs to the eukaryotic RPA43 RNA polymerase subunit family. In terms of assembly, component of the RNA polymerase I (Pol I) complex consisting of 13 subunits: a ten-subunit catalytic core composed of POLR1A/RPA1, POLR1B/RPA2, POLR1C/RPAC1, POLR1D/RPAC2, POLR1H/RPA12, POLR2E/RPABC1, POLR2F/RPABC2, POLR2H/RPABC3, POLR2K/RPABC4 and POLR2L/RPABC5; a mobile stalk subunit POLR1F/RPA43 protruding from the core and additional subunits homologous to general transcription factors POLR1E/RPA49 and POLR1G/RPA34. Interacts with RRN3/TIF-IA. Interacts with RRN3/TIF-IA. Widely expressed.

The protein localises to the nucleus. The protein resides in the nucleolus. Its function is as follows. Component of RNA polymerase I (Pol I), a DNA-dependent RNA polymerase which synthesizes ribosomal RNA precursors using the four ribonucleoside triphosphates as substrates. Through its association with RRN3/TIF-IA may be involved in recruitment of Pol I to rDNA promoters. The protein is DNA-directed RNA polymerase I subunit RPA43 of Mus musculus (Mouse).